A 326-amino-acid polypeptide reads, in one-letter code: Alkanal monooxygenase beta chain (326 aa).

Belongs to the bacterial luciferase oxidoreductase family. In terms of assembly, heterodimer of an alpha and a beta chain.

The catalysed reaction is a long-chain fatty aldehyde + FMNH2 + O2 = a long-chain fatty acid + hnu + FMN + H2O + 2 H(+). Its function is as follows. Light-emitting reaction in luminous bacteria. The specific role of the beta subunit is unknown, but it is absolutely required for bioluminescence activity. The chain is Alkanal monooxygenase beta chain (luxB) from Photobacterium leiognathi.